The sequence spans 123 residues: Small ribosomal subunit protein uS12cz/uS12cy (123 aa).

This sequence belongs to the universal ribosomal protein uS12 family. In terms of assembly, part of the 30S ribosomal subunit.

It is found in the plastid. The protein resides in the chloroplast. In terms of biological role, with S4 and S5 plays an important role in translational accuracy. Located at the interface of the 30S and 50S subunits. The polypeptide is Small ribosomal subunit protein uS12cz/uS12cy (rps12-A) (Arabis hirsuta (Hairy rock-cress)).